The following is a 345-amino-acid chain: Biotin synthase (345 aa).

Positions 66–291 (PEVEVEGIIS…RTMLRFAGGR (226 aa)) constitute a Radical SAM core domain. C81, C85, and C88 together coordinate [4Fe-4S] cluster. The [2Fe-2S] cluster site is built by C124, C157, C216, and R286.

It belongs to the radical SAM superfamily. Biotin synthase family. As to quaternary structure, homodimer. Requires [4Fe-4S] cluster as cofactor. It depends on [2Fe-2S] cluster as a cofactor.

It catalyses the reaction (4R,5S)-dethiobiotin + (sulfur carrier)-SH + 2 reduced [2Fe-2S]-[ferredoxin] + 2 S-adenosyl-L-methionine = (sulfur carrier)-H + biotin + 2 5'-deoxyadenosine + 2 L-methionine + 2 oxidized [2Fe-2S]-[ferredoxin]. Its pathway is cofactor biosynthesis; biotin biosynthesis; biotin from 7,8-diaminononanoate: step 2/2. Catalyzes the conversion of dethiobiotin (DTB) to biotin by the insertion of a sulfur atom into dethiobiotin via a radical-based mechanism. This is Biotin synthase from Mycobacterium avium (strain 104).